The chain runs to 609 residues: Arginine--tRNA ligase (609 aa).

The short motif at V114–H124 is the 'HIGH' region element.

This sequence belongs to the class-I aminoacyl-tRNA synthetase family. Monomer.

Its subcellular location is the cytoplasm. It catalyses the reaction tRNA(Arg) + L-arginine + ATP = L-arginyl-tRNA(Arg) + AMP + diphosphate. This chain is Arginine--tRNA ligase, found in Deinococcus radiodurans (strain ATCC 13939 / DSM 20539 / JCM 16871 / CCUG 27074 / LMG 4051 / NBRC 15346 / NCIMB 9279 / VKM B-1422 / R1).